Here is a 370-residue protein sequence, read N- to C-terminus: D-aspartate oxidase (370 aa).

Residues Ile-15, Ala-49, Ser-50, Gly-54, Val-166, Arg-317, Gly-346, and Gln-348 each contribute to the FAD site. The short motif at 368–370 (ARL) is the Microbody targeting signal element.

Belongs to the DAMOX/DASOX family. In terms of assembly, homotetramer. The cofactor is FAD.

It is found in the peroxisome matrix. It carries out the reaction D-aspartate + O2 + H2O = oxaloacetate + H2O2 + NH4(+). The catalysed reaction is D-glutamate + O2 + H2O = H2O2 + 2-oxoglutarate + NH4(+). Inhibited by malonate and D-malate. Very mildly inhibited by benzoate, ethylenediaminetetraacetic acid (EDTA), crotonate and anthranilate. May be very mildly inhibited by meso-tartrate. In terms of biological role, selectively catalyzes the oxidative deamination of acidic amino acids. Protects the organism from the toxicity of D-amino acids. Enables the organism to utilize D-amino acids as a source of nutrients. Enables the organism to utilize D-aspartate as a source of nitrogen and carbon. The chain is D-aspartate oxidase from Vanrija humicola (Yeast).